The following is a 480-amino-acid chain: NADH-quinone oxidoreductase subunit N (480 aa).

Transmembrane regions (helical) follow at residues 11–31, 38–58, 74–94, 109–129, 163–183, 200–220, 239–259, 273–293, 301–321, 329–349, 372–392, 405–425, and 451–471; these read VIPE…DLFV, ITYG…IALA, GLSD…FLYS, YVLG…YSFL, FILG…LYGI, GAGL…GLAF, PTSV…AIIM, WQGM…VVAI, MLAY…LAGT, LFYT…IILL, FAFI…TVGF, VEMI…AFYY, and VVLS…GLLM.

It belongs to the complex I subunit 2 family. As to quaternary structure, NDH-1 is composed of 14 different subunits. Subunits NuoA, H, J, K, L, M, N constitute the membrane sector of the complex.

It localises to the cell inner membrane. It catalyses the reaction a quinone + NADH + 5 H(+)(in) = a quinol + NAD(+) + 4 H(+)(out). In terms of biological role, NDH-1 shuttles electrons from NADH, via FMN and iron-sulfur (Fe-S) centers, to quinones in the respiratory chain. The immediate electron acceptor for the enzyme in this species is believed to be ubiquinone. Couples the redox reaction to proton translocation (for every two electrons transferred, four hydrogen ions are translocated across the cytoplasmic membrane), and thus conserves the redox energy in a proton gradient. The chain is NADH-quinone oxidoreductase subunit N from Thioalkalivibrio sulfidiphilus (strain HL-EbGR7).